The primary structure comprises 456 residues: NADPH-ferredoxin reductase FprA (456 aa).

Ser17, Glu43, Leu51, and Val87 together coordinate FAD. NADP(+) is bound by residues Arg113, 158–161 (NGNV), 202–203 (RR), and Glu214. FAD contacts are provided by residues Trp362 and 369–371 (GVI). NADP(+) is bound at residue Gly369.

It belongs to the ferredoxin--NADP reductase type 1 family. Monomer. Requires FAD as cofactor.

It carries out the reaction 2 reduced [2Fe-2S]-[ferredoxin] + NADP(+) + H(+) = 2 oxidized [2Fe-2S]-[ferredoxin] + NADPH. Its function is as follows. May serve as electron transfer protein and supply electrons to P450 systems. The sequence is that of NADPH-ferredoxin reductase FprA (fprA) from Mycobacterium leprae (strain TN).